The following is a 400-amino-acid chain: tRNA-specific 2-thiouridylase MnmA (400 aa).

ATP contacts are provided by residues Ala-19–Ser-26 and Leu-45. Cys-113 (nucleophile) is an active-site residue. Cys-113 and Cys-210 are joined by a disulfide. Position 137 (Gly-137) interacts with ATP. The segment at Arg-160 to Gln-162 is interaction with tRNA. The active-site Cysteine persulfide intermediate is the Cys-210.

It belongs to the MnmA/TRMU family.

It is found in the cytoplasm. It carries out the reaction S-sulfanyl-L-cysteinyl-[protein] + uridine(34) in tRNA + AH2 + ATP = 2-thiouridine(34) in tRNA + L-cysteinyl-[protein] + A + AMP + diphosphate + H(+). Its function is as follows. Catalyzes the 2-thiolation of uridine at the wobble position (U34) of tRNA, leading to the formation of s(2)U34. In Rhodopseudomonas palustris (strain BisB18), this protein is tRNA-specific 2-thiouridylase MnmA.